The chain runs to 211 residues: MKKTLLGSLILLAFAGNVQAADNPNPETKGKVTFYGKVVENTCKVKSGNRDMSVVLNDVGKAHLSQKGYTAMPTPFTITLEGCNANTGTKPKANKVGVYFYSWNNADKENSYTLKSTLTGTDKADNVNIQIFQENGTDAIGVADKTIDDFTHKNNGSTNSDKPTKNHISSATALNNQTGDIALHYIAQYYATGMASAGKGPTSVDFPIAYG.

An N-terminal signal peptide occupies residues 1-20 (MKKTLLGSLILLAFAGNVQA). Cysteine 43 and cysteine 83 form a disulfide bridge.

The protein belongs to the fimbrial protein family.

It localises to the fimbrium. Mediates adherence to oropharyngeal epithelial cells. Helps the airway colonization process. In Haemophilus influenzae, this protein is Major fimbrial subunit (hifA).